The primary structure comprises 803 residues: Phenylalanine--tRNA ligase beta subunit (803 aa).

Residues 40–150 form the tRNA-binding domain; sequence SNKFYGIVIA…IDAPIGCNFY (111 aa). The 76-residue stretch at 405-480 folds into the B5 domain; that stretch reads PKIKIIKLHR…RIYGYNHIPK (76 aa). Mg(2+) contacts are provided by D458 and E468. In terms of domain architecture, FDX-ACB spans 710-803; the sequence is SKFPKNYRDI…LKKHFNAIFR (94 aa).

It belongs to the phenylalanyl-tRNA synthetase beta subunit family. Type 1 subfamily. As to quaternary structure, tetramer of two alpha and two beta subunits. The cofactor is Mg(2+).

It localises to the cytoplasm. It carries out the reaction tRNA(Phe) + L-phenylalanine + ATP = L-phenylalanyl-tRNA(Phe) + AMP + diphosphate + H(+). This Blochmanniella floridana protein is Phenylalanine--tRNA ligase beta subunit.